The sequence spans 191 residues: Protein Ves (191 aa).

It belongs to the Ves family.

This Escherichia coli O8 (strain IAI1) protein is Protein Ves.